A 254-amino-acid polypeptide reads, in one-letter code: MNSQFAGLTREACVALLASYPLSVGILAGQWIALHRYLQQLEALNQPLLHLDLMDGQFCPQFTVGPWAVGQLPQTFIKDVHLMVADQWAAAQACVKAGAHCITLQAEGDIHLHHTLSWLGQQTVPVIDGEMPVIRGISLCPATPLDVIIPILSDVEVIQLLAVNPGYGSKMRSSDLYERVAQLLCLLGDKREGKIIVIDGSLTQDQLPSLIAQGIDRVVSGSALFRDDRLVENTRSWRAMFKVAGDTTFLPSTA.

A helical transmembrane segment spans residues 14 to 34 (VALLASYPLSVGILAGQWIAL). 3 residues coordinate a divalent metal cation: His50, Asp52, and His81. Catalysis depends on Asp52, which acts as the Proton acceptor. Residues His81, 166–169 (GYGS), 199–201 (DGS), and 221–222 (GS) contribute to the substrate site. Asp199 serves as a coordination point for a divalent metal cation. Catalysis depends on Asp199, which acts as the Proton donor.

Belongs to the ribulose-phosphate 3-epimerase family. Requires a divalent metal cation as cofactor.

It localises to the cell membrane. In Salmonella typhi, this protein is Putative epimerase LsrE (lsrE).